The following is a 114-amino-acid chain: Immunoglobulin kappa variable 6D-21 (114 aa).

The signal sequence occupies residues 1–19; the sequence is MSPSQLIGFLLLWVPASRG. The framework-1 stretch occupies residues 20 to 42; it reads EIVLTQSPDFQSVTPKEKVTITC. Residues 20-114 form the Ig-like domain; sequence EIVLTQSPDF…YYCHQSSSLP (95 aa). A disulfide bridge connects residues cysteine 42 and cysteine 107. The tract at residues 43-53 is complementarity-determining-1; that stretch reads RASQSIGSSLH. The interval 54–68 is framework-2; the sequence is WYQQKPDQSPKLLIK. The complementarity-determining-2 stretch occupies residues 69–75; that stretch reads YASQSIS. The tract at residues 76 to 107 is framework-3; sequence GVPSRFSGSGSGTDFTLTINSLEAEDAAAYYC. Residues 108–114 form a complementarity-determining-3 region; that stretch reads HQSSSLP.

In terms of assembly, immunoglobulins are composed of two identical heavy chains and two identical light chains; disulfide-linked.

The protein localises to the secreted. Its subcellular location is the cell membrane. V region of the variable domain of immunoglobulin light chains that participates in the antigen recognition. Immunoglobulins, also known as antibodies, are membrane-bound or secreted glycoproteins produced by B lymphocytes. In the recognition phase of humoral immunity, the membrane-bound immunoglobulins serve as receptors which, upon binding of a specific antigen, trigger the clonal expansion and differentiation of B lymphocytes into immunoglobulins-secreting plasma cells. Secreted immunoglobulins mediate the effector phase of humoral immunity, which results in the elimination of bound antigens. The antigen binding site is formed by the variable domain of one heavy chain, together with that of its associated light chain. Thus, each immunoglobulin has two antigen binding sites with remarkable affinity for a particular antigen. The variable domains are assembled by a process called V-(D)-J rearrangement and can then be subjected to somatic hypermutations which, after exposure to antigen and selection, allow affinity maturation for a particular antigen. The polypeptide is Immunoglobulin kappa variable 6D-21 (Homo sapiens (Human)).